The primary structure comprises 89 residues: Small ribosomal subunit protein uS15 (89 aa).

It belongs to the universal ribosomal protein uS15 family. As to quaternary structure, part of the 30S ribosomal subunit. Forms a bridge to the 50S subunit in the 70S ribosome, contacting the 23S rRNA.

In terms of biological role, one of the primary rRNA binding proteins, it binds directly to 16S rRNA where it helps nucleate assembly of the platform of the 30S subunit by binding and bridging several RNA helices of the 16S rRNA. Functionally, forms an intersubunit bridge (bridge B4) with the 23S rRNA of the 50S subunit in the ribosome. The polypeptide is Small ribosomal subunit protein uS15 (Chlorobaculum tepidum (strain ATCC 49652 / DSM 12025 / NBRC 103806 / TLS) (Chlorobium tepidum)).